An 87-amino-acid polypeptide reads, in one-letter code: Small ribosomal subunit protein bS20 (87 aa).

The segment at Met-1–Ala-22 is disordered. The segment covering Ala-7–Arg-20 has biased composition (basic residues).

It belongs to the bacterial ribosomal protein bS20 family.

Binds directly to 16S ribosomal RNA. This Nitrosococcus oceani (strain ATCC 19707 / BCRC 17464 / JCM 30415 / NCIMB 11848 / C-107) protein is Small ribosomal subunit protein bS20.